The primary structure comprises 628 residues: Protein SDS23 (628 aa).

The interval 1 to 126 (MVNPPQPRQM…NKSSSQSIAP (126 aa)) is disordered. Residues 15–24 (RLSTSTSSGP) are compositionally biased toward polar residues. 2 stretches are compositionally biased toward low complexity: residues 40-71 (QLQH…PGST) and 109-123 (SRHA…SSQS). 2 consecutive CBS domains span residues 258–319 (LHPK…RFPS) and 334–392 (GSSN…SHLL). The interval 551–609 (GRRTDPQAARNQRRRSSTSTTRSSIDSALSAEGILPSGSAIIGSSNAANTGRRGSVEVS) is disordered. The span at 587-599 (SGSAIIGSSNAAN) shows a compositional bias: low complexity.

This sequence belongs to the SDS23 family.

The protein resides in the cytoplasm. Its subcellular location is the nucleus. Functionally, involved in DNA replication and cell separation. In Candida albicans (strain SC5314 / ATCC MYA-2876) (Yeast), this protein is Protein SDS23 (SDS24).